Here is a 269-residue protein sequence, read N- to C-terminus: Sushi domain-containing protein 3 (269 aa).

The interval 1-23 (MRRTSATLRGRARPRWRAGNTTP) is disordered. Over 1–103 (MRRTSATLRG…VPPHETFGFK (103 aa)) the chain is Extracellular. In terms of domain architecture, Sushi spans 30-93 (GTCAQLHPPP…WSSGSPVCKA (64 aa)). 2 disulfides stabilise this stretch: Cys32–Cys75 and Cys61–Cys91. The chain crosses the membrane as a helical span at residues 104 to 124 (VAVIASIVSCAIILLMSMAFL). Residues 125 to 269 (TCCLLKCVQK…PGRPKVYLPG (145 aa)) lie on the Cytoplasmic side of the membrane. The segment at 171–237 (NNSSSVGGGN…RMGTPGPGGC (67 aa)) is disordered. Residues 176–190 (VGGGNGGPSGGGGKP) are compositionally biased toward gly residues.

The protein resides in the cell membrane. The sequence is that of Sushi domain-containing protein 3 (Susd3) from Mus musculus (Mouse).